The following is a 220-amino-acid chain: Deoxyribose-phosphate aldolase 1 (220 aa).

Aspartate 89 functions as the Proton donor/acceptor in the catalytic mechanism. Lysine 151 (schiff-base intermediate with acetaldehyde) is an active-site residue. Lysine 180 serves as the catalytic Proton donor/acceptor.

The protein belongs to the DeoC/FbaB aldolase family. DeoC type 1 subfamily.

It is found in the cytoplasm. The enzyme catalyses 2-deoxy-D-ribose 5-phosphate = D-glyceraldehyde 3-phosphate + acetaldehyde. It functions in the pathway carbohydrate degradation; 2-deoxy-D-ribose 1-phosphate degradation; D-glyceraldehyde 3-phosphate and acetaldehyde from 2-deoxy-alpha-D-ribose 1-phosphate: step 2/2. Its function is as follows. Catalyzes a reversible aldol reaction between acetaldehyde and D-glyceraldehyde 3-phosphate to generate 2-deoxy-D-ribose 5-phosphate. The polypeptide is Deoxyribose-phosphate aldolase 1 (Staphylococcus aureus (strain bovine RF122 / ET3-1)).